The sequence spans 49 residues: Agglutinin-1 (49 aa).

In terms of assembly, homooligomer. Glycosylated.

Functionally, beta-galactoside specific lectin. Has a hemagglutinating activity on erythrocytes. The protein is Agglutinin-1 of Pomacea flagellata (Apple snail).